A 258-amino-acid polypeptide reads, in one-letter code: Imidazole glycerol phosphate synthase subunit HisF (258 aa).

Active-site residues include D12 and D131.

This sequence belongs to the HisA/HisF family. As to quaternary structure, heterodimer of HisH and HisF.

The protein resides in the cytoplasm. The catalysed reaction is 5-[(5-phospho-1-deoxy-D-ribulos-1-ylimino)methylamino]-1-(5-phospho-beta-D-ribosyl)imidazole-4-carboxamide + L-glutamine = D-erythro-1-(imidazol-4-yl)glycerol 3-phosphate + 5-amino-1-(5-phospho-beta-D-ribosyl)imidazole-4-carboxamide + L-glutamate + H(+). It participates in amino-acid biosynthesis; L-histidine biosynthesis; L-histidine from 5-phospho-alpha-D-ribose 1-diphosphate: step 5/9. IGPS catalyzes the conversion of PRFAR and glutamine to IGP, AICAR and glutamate. The HisF subunit catalyzes the cyclization activity that produces IGP and AICAR from PRFAR using the ammonia provided by the HisH subunit. The chain is Imidazole glycerol phosphate synthase subunit HisF from Pseudarthrobacter chlorophenolicus (strain ATCC 700700 / DSM 12829 / CIP 107037 / JCM 12360 / KCTC 9906 / NCIMB 13794 / A6) (Arthrobacter chlorophenolicus).